Consider the following 166-residue polypeptide: Eukaryotic translation initiation factor 5A (166 aa).

The interval Met1–Tyr21 is disordered. Hypusine is present on Lys53. Residues Glu101–Asp121 form a disordered region. Residues Met112–Asp121 are compositionally biased toward acidic residues.

Belongs to the eIF-5A family. Lys-53 undergoes hypusination, a unique post-translational modification that consists in the addition of a butylamino group from spermidine to lysine side chain, leading to the formation of the unusual amino acid hypusine. eIF-5As are the only known proteins to undergo this modification, which is essential for their function.

The protein localises to the cytoplasm. Translation factor that promotes translation elongation and termination, particularly upon ribosome stalling at specific amino acid sequence contexts. Binds between the exit (E) and peptidyl (P) site of the ribosome and promotes rescue of stalled ribosome: specifically required for efficient translation of polyproline-containing peptides as well as other motifs that stall the ribosome. Acts as a ribosome quality control (RQC) cofactor by joining the RQC complex to facilitate peptidyl transfer during CAT tailing step. The protein is Eukaryotic translation initiation factor 5A of Leishmania donovani.